The primary structure comprises 114 residues: Non-specific lipid-transfer protein 1 (114 aa).

Residues 1–23 form the signal peptide; that stretch reads MEIAGKIACFVVLCMVVAAPCAE. Cystine bridges form between C27–C73, C37–C50, C51–C96, and C71–C110.

Belongs to the plant LTP family. As to expression, high expression in leaf epidermis and shoot apex, and also in root epidermis during seedling germination.

Its function is as follows. Plant non-specific lipid-transfer proteins transfer phospholipids as well as galactolipids across membranes. Binds cis-unsaturated fatty acids and jasmonic acid with a higher affinity than linear chain fatty acids. Formation of the complex with jasmonic acid results in a conformational change facilitating the LPT1 binding on the elicitin plasma membrane receptor that is known to be involved in plant defense induction. May also play a role in wax or cutin deposition in the cell walls of expanding epidermal cells and certain secretory tissues. This chain is Non-specific lipid-transfer protein 1 (LTP1), found in Nicotiana tabacum (Common tobacco).